We begin with the raw amino-acid sequence, 158 residues long: 3-hydroxyacyl-[acyl-carrier-protein] dehydratase FabZ (158 aa).

His-60 is an active-site residue.

The protein belongs to the thioester dehydratase family. FabZ subfamily.

It is found in the cytoplasm. The catalysed reaction is a (3R)-hydroxyacyl-[ACP] = a (2E)-enoyl-[ACP] + H2O. Its function is as follows. Involved in unsaturated fatty acids biosynthesis. Catalyzes the dehydration of short chain beta-hydroxyacyl-ACPs and long chain saturated and unsaturated beta-hydroxyacyl-ACPs. In Zymomonas mobilis subsp. mobilis (strain ATCC 31821 / ZM4 / CP4), this protein is 3-hydroxyacyl-[acyl-carrier-protein] dehydratase FabZ.